The chain runs to 473 residues: tRNA modification GTPase MnmE (473 aa).

Residues arginine 30, glutamate 95, and arginine 134 each coordinate (6S)-5-formyl-5,6,7,8-tetrahydrofolate. A TrmE-type G domain is found at 230 to 394 (GVAAVIAGRP…LKSTMAGMVE (165 aa)). Residues 240–245 (NAGKST), 259–265 (SHMPGTT), and 284–287 (DTAG) each bind GTP. Mg(2+) is bound by residues serine 244 and threonine 265. Residue lysine 473 participates in (6S)-5-formyl-5,6,7,8-tetrahydrofolate binding.

This sequence belongs to the TRAFAC class TrmE-Era-EngA-EngB-Septin-like GTPase superfamily. TrmE GTPase family. As to quaternary structure, homodimer. Heterotetramer of two MnmE and two MnmG subunits. Requires K(+) as cofactor.

It localises to the cytoplasm. Its function is as follows. Exhibits a very high intrinsic GTPase hydrolysis rate. Involved in the addition of a carboxymethylaminomethyl (cmnm) group at the wobble position (U34) of certain tRNAs, forming tRNA-cmnm(5)s(2)U34. This chain is tRNA modification GTPase MnmE, found in Chlorobium phaeovibrioides (strain DSM 265 / 1930) (Prosthecochloris vibrioformis (strain DSM 265)).